The sequence spans 807 residues: 1,4-alpha-glucan branching enzyme GlgB (807 aa).

The active-site Nucleophile is Asp-405. The active-site Proton donor is the Glu-458.

It belongs to the glycosyl hydrolase 13 family. GlgB subfamily. Monomer.

It catalyses the reaction Transfers a segment of a (1-&gt;4)-alpha-D-glucan chain to a primary hydroxy group in a similar glucan chain.. The protein operates within glycan biosynthesis; glycogen biosynthesis. Functionally, catalyzes the formation of the alpha-1,6-glucosidic linkages in glycogen by scission of a 1,4-alpha-linked oligosaccharide from growing alpha-1,4-glucan chains and the subsequent attachment of the oligosaccharide to the alpha-1,6 position. This chain is 1,4-alpha-glucan branching enzyme GlgB, found in Histophilus somni (strain 129Pt) (Haemophilus somnus).